Consider the following 528-residue polypeptide: Butyrophilin subfamily 2 member A2 (528 aa).

The N-terminal stretch at 1 to 29 (MESAAALHFSRPASLLLLLLLSLCALVSA) is a signal peptide. Residues 30–249 (QVTVVGPTDP…SFMPSVSPCA (220 aa)) lie on the Extracellular side of the membrane. An Ig-like V-type domain is found at 31–142 (VTVVGPTDPI…SYDEAILHLI (112 aa)). N47, N115, and N121 each carry an N-linked (GlcNAc...) asparagine glycan. C52 and C126 form a disulfide bridge. One can recognise an Ig-like C2-type domain in the interval 150-232 (PLIEMRGHED…NNTLLSQKKE (83 aa)). The helical transmembrane segment at 250–270 (VALPIVVVILMILFAVCMYWI) threads the bilayer. Positions 270–320 (INKLQKEKKILSGEKEFERETREIAVKELEKERVQKEEELQVKEKLQEELR) form a coiled coil. Topologically, residues 271–528 (NKLQKEKKIL…LHRVGTHQSL (258 aa)) are cytoplasmic. A B30.2/SPRY domain is found at 311–507 (VKEKLQEELR…IFICPALTGA (197 aa)).

This sequence belongs to the immunoglobulin superfamily. BTN/MOG family. N-glycosylated.

Its subcellular location is the membrane. Inhibits the proliferation of CD4 and CD8 T-cells activated by anti-CD3 antibodies, T-cell metabolism and IL2 and IFNG secretion. The chain is Butyrophilin subfamily 2 member A2 (BTN2A2) from Pongo abelii (Sumatran orangutan).